Reading from the N-terminus, the 222-residue chain is Adenylate kinase, chloroplastic (222 aa).

Residue 15-20 participates in ATP binding; that stretch reads ASGKGT. The tract at residues 35 to 64 is NMP; the sequence is SAGDLLRAEIAAGSENGKRAKEFMEKGQLV. Residues arginine 41, 62 to 64, 91 to 94, and glutamine 98 each bind AMP; these read QLV and GYPR. The tract at residues 128 to 161 is LID; it reads GRRLDPVTGKIYHLKYSPPENEEIASRLTQRFDD. An ATP-binding site is contributed by arginine 129. Arginine 158 serves as a coordination point for AMP. Alanine 195 serves as a coordination point for ATP.

In terms of assembly, monomer.

It is found in the plastid. The protein resides in the chloroplast. It carries out the reaction AMP + ATP = 2 ADP. Its function is as follows. Catalyzes the reversible transfer of the terminal phosphate group between ATP and AMP. Plays an important role in cellular energy homeostasis and in adenine nucleotide metabolism. The maize enzyme also works with CMP, albeit with 10% of the activity with AMP. This chain is Adenylate kinase, chloroplastic (ADK1), found in Zea mays (Maize).